A 346-amino-acid chain; its full sequence is N-acetyl-gamma-glutamyl-phosphate reductase (346 aa).

Cysteine 150 is an active-site residue.

The protein belongs to the NAGSA dehydrogenase family. Type 1 subfamily.

The protein resides in the cytoplasm. The catalysed reaction is N-acetyl-L-glutamate 5-semialdehyde + phosphate + NADP(+) = N-acetyl-L-glutamyl 5-phosphate + NADPH + H(+). It functions in the pathway amino-acid biosynthesis; L-arginine biosynthesis; N(2)-acetyl-L-ornithine from L-glutamate: step 3/4. Its function is as follows. Catalyzes the NADPH-dependent reduction of N-acetyl-5-glutamyl phosphate to yield N-acetyl-L-glutamate 5-semialdehyde. In Moorella thermoacetica (strain ATCC 39073 / JCM 9320), this protein is N-acetyl-gamma-glutamyl-phosphate reductase.